A 270-amino-acid chain; its full sequence is Glutamate racemase (270 aa).

Residues 10 to 11 (DS) and 42 to 43 (YG) each bind substrate. Cys73 functions as the Proton donor/acceptor in the catalytic mechanism. Substrate is bound at residue 74 to 75 (NT). Cys184 serves as the catalytic Proton donor/acceptor. 185-186 (TH) contacts substrate.

Belongs to the aspartate/glutamate racemases family.

It carries out the reaction L-glutamate = D-glutamate. It participates in cell wall biogenesis; peptidoglycan biosynthesis. Provides the (R)-glutamate required for cell wall biosynthesis. The protein is Glutamate racemase of Geobacter metallireducens (strain ATCC 53774 / DSM 7210 / GS-15).